Here is a 242-residue protein sequence, read N- to C-terminus: Glucosamine-6-phosphate deaminase (242 aa).

The Proton acceptor; for enolization step role is filled by aspartate 67. The For ring-opening step role is filled by asparagine 137. Histidine 139 acts as the Proton acceptor; for ring-opening step in catalysis. Glutamate 144 acts as the For ring-opening step in catalysis.

Belongs to the glucosamine/galactosamine-6-phosphate isomerase family. NagB subfamily.

The enzyme catalyses alpha-D-glucosamine 6-phosphate + H2O = beta-D-fructose 6-phosphate + NH4(+). The protein operates within amino-sugar metabolism; N-acetylneuraminate degradation; D-fructose 6-phosphate from N-acetylneuraminate: step 5/5. Catalyzes the reversible isomerization-deamination of glucosamine 6-phosphate (GlcN6P) to form fructose 6-phosphate (Fru6P) and ammonium ion. The protein is Glucosamine-6-phosphate deaminase of Staphylococcus saprophyticus subsp. saprophyticus (strain ATCC 15305 / DSM 20229 / NCIMB 8711 / NCTC 7292 / S-41).